The following is a 373-amino-acid chain: Chaperone protein DnaJ (373 aa).

Positions Asp-4 to Gly-69 constitute a J domain. The CR-type zinc finger occupies Gly-131–Thr-209. Residues Cys-144, Cys-147, Cys-161, Cys-164, Cys-183, Cys-186, Cys-197, and Cys-200 each contribute to the Zn(2+) site. CXXCXGXG motif repeat units follow at residues Cys-144–Gly-151, Cys-161–Gly-168, Cys-183–Gly-190, and Cys-197–Gly-204.

This sequence belongs to the DnaJ family. As to quaternary structure, homodimer. Requires Zn(2+) as cofactor.

It is found in the cytoplasm. Participates actively in the response to hyperosmotic and heat shock by preventing the aggregation of stress-denatured proteins and by disaggregating proteins, also in an autonomous, DnaK-independent fashion. Unfolded proteins bind initially to DnaJ; upon interaction with the DnaJ-bound protein, DnaK hydrolyzes its bound ATP, resulting in the formation of a stable complex. GrpE releases ADP from DnaK; ATP binding to DnaK triggers the release of the substrate protein, thus completing the reaction cycle. Several rounds of ATP-dependent interactions between DnaJ, DnaK and GrpE are required for fully efficient folding. Also involved, together with DnaK and GrpE, in the DNA replication of plasmids through activation of initiation proteins. The polypeptide is Chaperone protein DnaJ (Desulfotalea psychrophila (strain LSv54 / DSM 12343)).